We begin with the raw amino-acid sequence, 160 residues long: Ribosomal RNA large subunit methyltransferase H (160 aa).

S-adenosyl-L-methionine contacts are provided by residues leucine 77, glycine 109, and 128 to 133 (FSRMTF).

This sequence belongs to the RNA methyltransferase RlmH family. In terms of assembly, homodimer.

The protein resides in the cytoplasm. It catalyses the reaction pseudouridine(1915) in 23S rRNA + S-adenosyl-L-methionine = N(3)-methylpseudouridine(1915) in 23S rRNA + S-adenosyl-L-homocysteine + H(+). Its function is as follows. Specifically methylates the pseudouridine at position 1915 (m3Psi1915) in 23S rRNA. The protein is Ribosomal RNA large subunit methyltransferase H of Pelotomaculum thermopropionicum (strain DSM 13744 / JCM 10971 / SI).